A 477-amino-acid chain; its full sequence is RNA pseudouridine synthase 6, chloroplastic (477 aa).

The transit peptide at 1-52 (MPKAAASLASLLPQLWHRPVQPPPFLHRALSSSSPLLRRHRAALHSPAAPLS) directs the protein to the chloroplast. An S4 RNA-binding domain is found at 98-205 (EVAVDFISRS…FPRCYEIDWK (108 aa)). D258 is a catalytic residue.

Belongs to the pseudouridine synthase RluA family.

Its subcellular location is the plastid. It is found in the chloroplast. It catalyses the reaction a uridine in RNA = a pseudouridine in RNA. The polypeptide is RNA pseudouridine synthase 6, chloroplastic (Oryza sativa subsp. japonica (Rice)).